Reading from the N-terminus, the 562-residue chain is Protein wntless (562 aa).

Over 1–13 (MSGTILENLSGRK) the chain is Cytoplasmic. Residues 14 to 34 (LSILVASLLLCQVFCFLLGGL) traverse the membrane as a helical segment. Residues 35–239 (YAPLPAGHVT…AIHQNGGFTQ (205 aa)) are Lumenal-facing. Residue Asn-58 is glycosylated (N-linked (GlcNAc...) asparagine). A helical membrane pass occupies residues 240 to 260 (IWLMLKTVLFPFVVGIMIWFW). Topologically, residues 261-270 (RRVHLLQRSP) are cytoplasmic. Residues 271–291 (ALLEYMLIYLGGALTFLNLPL) form a helical membrane-spanning segment. Residues 292–311 (EYLSLVVEMPYMLLLSDIRQ) lie on the Lumenal side of the membrane. Residues 312 to 332 (GIFYAMLLSFWLVFAGEHMLI) form a helical membrane-spanning segment. The Cytoplasmic portion of the chain corresponds to 333 to 344 (QDAPNKSTIRSR). Residues 345 to 365 (YWKHLSAVVVGCISLFVFDIC) form a helical membrane-spanning segment. Topologically, residues 366 to 390 (ERGVQLRNPFYSIWTTPLGAKVAMT) are lumenal. A helical transmembrane segment spans residues 391–411 (FIILAGVSAAIYFLFLCYMIW). Over 412-441 (KVFRNIGDKRTSLPSMSQARRLHYEGLIYR) the chain is Cytoplasmic. A helical membrane pass occupies residues 442 to 462 (FKFLMLATLLCAALTVAGFIM). Over 463-482 (GQMAEGQWQWNDNVEIQLTS) the chain is Lumenal. Residues 483–503 (AFLTGVYGMWNIYIFALLILY) form a helical membrane-spanning segment. At 504–562 (APSHKQWPTMHHSDETTQSNENIVASAASEEIEFSHLPSDSNPSEISSLTSFTRKVAFD) the chain is on the cytoplasmic side. Residues 539-562 (HLPSDSNPSEISSLTSFTRKVAFD) form a disordered region. The span at 541–556 (PSDSNPSEISSLTSFT) shows a compositional bias: polar residues.

The protein belongs to the wntless family. In terms of assembly, interacts with wg; in the Golgi. Interacts with Vps35, a component of the retromer complex; wls stability is regulated by Vps35.

It is found in the presynaptic cell membrane. Its subcellular location is the postsynaptic cell membrane. The protein localises to the cell membrane. It localises to the endoplasmic reticulum membrane. The protein resides in the endosome membrane. It is found in the golgi apparatus membrane. A segment polarity gene required for wingless (wg)-dependent patterning processes, acting in both wg-sending cells and wg-target cells. In non-neuronal cells wls directs wg secretion. The wls traffic loop encompasses the Golgi, the cell surface, an endocytic compartment and a retrograde route leading back to the Golgi, and involves clathrin-mediated endocytosis and the retromer complex (a conserved protein complex consisting of Vps35 and Vps26). In neuronal cells (the larval motorneuron NMJ), the wg signal moves across the synapse via the release of wls-containing exosome-like vesicles. Postsynaptic wls is required for the trafficking of fz2 through the fz2-interacting protein Grip. The sequence is that of Protein wntless from Drosophila ananassae (Fruit fly).